Here is a 65-residue protein sequence, read N- to C-terminus: Photosystem II reaction center protein J (65 aa).

Positions 1-17 are enriched in basic and acidic residues; the sequence is MSTKLKGPDGRIPDRLP. The segment at 1–21 is disordered; it reads MSTKLKGPDGRIPDRLPDGSP. Residues 36 to 56 traverse the membrane as a helical segment; that stretch reads LWLVATVGGMAVLSVLGLFFF.

It belongs to the PsbJ family. In terms of assembly, PSII is composed of 1 copy each of membrane proteins PsbA, PsbB, PsbC, PsbD, PsbE, PsbF, PsbH, PsbI, PsbJ, PsbK, PsbL, PsbM, PsbT, PsbX, PsbY, Psb30/Ycf12, peripheral proteins PsbO, CyanoQ (PsbQ), PsbU, PsbV and a large number of cofactors. It forms dimeric complexes.

Its subcellular location is the cellular thylakoid membrane. In terms of biological role, one of the components of the core complex of photosystem II (PSII). PSII is a light-driven water:plastoquinone oxidoreductase that uses light energy to abstract electrons from H(2)O, generating O(2) and a proton gradient subsequently used for ATP formation. It consists of a core antenna complex that captures photons, and an electron transfer chain that converts photonic excitation into a charge separation. This is Photosystem II reaction center protein J from Prochlorococcus marinus (strain MIT 9313).